A 481-amino-acid chain; its full sequence is Ribosomal RNA small subunit methyltransferase F (481 aa).

Residues 119–125 (ASAPGSK), glutamate 143, aspartate 170, and aspartate 188 each bind S-adenosyl-L-methionine. The Nucleophile role is filled by cysteine 241.

The protein belongs to the class I-like SAM-binding methyltransferase superfamily. RsmB/NOP family.

It localises to the cytoplasm. The catalysed reaction is cytidine(1407) in 16S rRNA + S-adenosyl-L-methionine = 5-methylcytidine(1407) in 16S rRNA + S-adenosyl-L-homocysteine + H(+). Its function is as follows. Specifically methylates the cytosine at position 1407 (m5C1407) of 16S rRNA. This Shewanella sp. (strain MR-4) protein is Ribosomal RNA small subunit methyltransferase F.